The primary structure comprises 217 residues: Urease accessory protein UreG (217 aa).

A GTP-binding site is contributed by 13 to 20; it reads GPVGSGKT.

Belongs to the SIMIBI class G3E GTPase family. UreG subfamily. In terms of assembly, homodimer. UreD, UreF and UreG form a complex that acts as a GTP-hydrolysis-dependent molecular chaperone, activating the urease apoprotein by helping to assemble the nickel containing metallocenter of UreC. The UreE protein probably delivers the nickel.

It is found in the cytoplasm. In terms of biological role, facilitates the functional incorporation of the urease nickel metallocenter. This process requires GTP hydrolysis, probably effectuated by UreG. This Frankia alni (strain DSM 45986 / CECT 9034 / ACN14a) protein is Urease accessory protein UreG.